The following is a 260-amino-acid chain: Recombination-promoting nuclease RpnD (260 aa).

This sequence belongs to the Rpn/YhgA-like nuclease family.

Functionally, a low activity DNA endonuclease probably yielding 3'-hydroxyl ends. Involved in RecA-independent recombination and horizontal gene transfer. The polypeptide is Recombination-promoting nuclease RpnD (rpnD) (Escherichia coli O157:H7).